Reading from the N-terminus, the 367-residue chain is Calcium uniporter protein, mitochondrial (367 aa).

Residues 1-12 constitute a mitochondrion transit peptide; the sequence is MAMPRVLCRVRL. At 13–232 the chain is on the mitochondrial matrix side; sequence LIHNDFSVIS…LEEKKLELEQ (220 aa). Residues 61 to 80 form a disordered region; it reads KQDASSSSSDSDSSDSDEDD. The stretch at 199–233 forms a coiled coil; it reads REHQLQKEVELTTQLETLQQELLPLEEKKLELEQV. The helical transmembrane segment at 233-253 threads the bilayer; that stretch reads VANRRSNWMAWAGLGLMSVQF. The Mitochondrial intermembrane portion of the chain corresponds to 254-262; that stretch reads GILARLTWW. A helical transmembrane segment spans residues 263-284; that stretch reads EYSWDIMEPVTYFVTYGTAMAA. Positions 266–276 match the Selectivity filter motif; that stretch reads WDIMEPVTYFV. Glu-270 contacts Ca(2+). The Mitochondrial matrix segment spans residues 285 to 367; it reads YAYFVLTREE…KKQVEEKAKE (83 aa).

Belongs to the MCU (TC 1.A.77) family. As to quaternary structure, homotetramer. Component of the uniplex complex, composed of MCU, EMRE, MICU1 and MICU2 in a 4:4:1:1 stoichiometry.

The protein resides in the mitochondrion inner membrane. The enzyme catalyses Ca(2+)(in) = Ca(2+)(out). With respect to regulation, MCU channel activity is regulated by the heterodimer composed of MICU1 and MICU2, which act as calcium-sensors. At low calcium levels, MICU1 occludes the pore of the MCU channel, preventing mitochondrial calcium uptake. At higher calcium levels, calcium-binding to MICU1 and MICU2 induces a conformational change that weakens MCU-MICU1 interactions and moves the MICU1-MICU2 heterodimer away from the pore, allowing calcium permeation through the channel. Its function is as follows. Channel-forming and calcium-conducting subunit of the mitochondrial inner membrane calcium uniporter complex (uniplex), which mediates calcium uptake into the mitochondrial matrix. MCU channel activity is regulated by the calcium-sensor subunits of the uniplex MICU1 and MICU2. Mitochondrial calcium homeostasis plays key roles in cellular physiology and regulates ATP production, cytoplasmic calcium signals and activation of cell death pathways. The chain is Calcium uniporter protein, mitochondrial from Tribolium castaneum (Red flour beetle).